The primary structure comprises 140 residues: Putative pre-16S rRNA nuclease (140 aa).

It belongs to the YqgF nuclease family.

Its subcellular location is the cytoplasm. Functionally, could be a nuclease involved in processing of the 5'-end of pre-16S rRNA. This is Putative pre-16S rRNA nuclease from Vibrio cholerae serotype O1 (strain ATCC 39541 / Classical Ogawa 395 / O395).